A 412-amino-acid chain; its full sequence is MNAEIIAVGTELLLGQIANTNAQFLSEKLASIGINVYYHTVVGDNNKRLQQAIEVAEERADMLIFTGGLGPTKDDLTKETIASSLGEELVYDENALALISDYFKRTGREFTENNKKQALVLNGANVFANDHGMAPGMGLNKNGKVYILLPGPPKEMKPMYVSYVEPFLRNFTTGENIYSRVLRFFGIGESQLEVKVQDLIDGQTNPTIAPLANDGEVTLRLTAKHQNVDEAEKLIQHVEDLILERVGEFFYGYDQEFLHYKAIELLKKKGLTLACAESLTGGLFGNQVTESAGVSSVFKGGVICYHNDVKQHVLHVPEEVLSTDGAVSKECARYLAENVKELLKADIGISFTGVAGPDASEHKEPGTVFVGLAIKDEPTVVFPLNLSGSRQQIRERSAKYGFYHLYKKLEEI.

Belongs to the CinA family.

This is Putative competence-damage inducible protein from Bacillus cereus (strain ATCC 10987 / NRS 248).